Consider the following 34-residue polypeptide: Photosystem II reaction center protein Psb30 (34 aa).

The chain crosses the membrane as a helical span at residues 6 to 26 (IVAQLLSLALVTLSGPAVIFL).

It belongs to the Psb30/Ycf12 family. As to quaternary structure, PSII is composed of 1 copy each of membrane proteins PsbA, PsbB, PsbC, PsbD, PsbE, PsbF, PsbH, PsbI, PsbJ, PsbK, PsbL, PsbM, PsbT, PsbX, PsbY, PsbZ, Psb30/Ycf12, peripheral proteins of the oxygen-evolving complex and a large number of cofactors. It forms dimeric complexes.

It is found in the plastid. It localises to the chloroplast thylakoid membrane. In terms of biological role, a core subunit of photosystem II (PSII), probably helps stabilize the reaction center. In Emiliania huxleyi (Coccolithophore), this protein is Photosystem II reaction center protein Psb30.